Here is a 576-residue protein sequence, read N- to C-terminus: Aspartate--tRNA ligase (576 aa).

Glu-171 provides a ligand contact to L-aspartate. An aspartate region spans residues 195–198; the sequence is QLFK. Arg-217 lines the L-aspartate pocket. ATP contacts are provided by residues 217–219 and Gln-226; that span reads RDE. His-450 lines the L-aspartate pocket. An ATP-binding site is contributed by Glu-484. Arg-491 provides a ligand contact to L-aspartate. 536-539 serves as a coordination point for ATP; that stretch reads GLDR.

Belongs to the class-II aminoacyl-tRNA synthetase family. Type 1 subfamily. In terms of assembly, homodimer.

It localises to the cytoplasm. The catalysed reaction is tRNA(Asp) + L-aspartate + ATP = L-aspartyl-tRNA(Asp) + AMP + diphosphate. Functionally, catalyzes the attachment of L-aspartate to tRNA(Asp) in a two-step reaction: L-aspartate is first activated by ATP to form Asp-AMP and then transferred to the acceptor end of tRNA(Asp). This is Aspartate--tRNA ligase from Buchnera aphidicola subsp. Baizongia pistaciae (strain Bp).